Consider the following 333-residue polypeptide: Nucleoid-associated protein (333 aa).

This sequence belongs to the YejK family.

The protein localises to the cytoplasm. Its subcellular location is the nucleoid. This Metapseudomonas resinovorans (Pseudomonas resinovorans) protein is Nucleoid-associated protein.